A 337-amino-acid chain; its full sequence is MKIALDVMGGDHAPEAHVEAAIKAVKAFPDLTITLVGNEEEIRPLLPANDPRLPILHTTEKIEDTDQPTTAVRRKKDSSMVLAVREVKEGRADAVISSGNTGALMTAGLLYVGRIQGIDRPALAPMLPTLDEKGFLLLDVGANMDGKPEHLLQYAIMGNTYMEMVRGIKQPRVGLLNVGTEAGKGNELTKAAFPLLEAGPFHFIGNVEARELLNGACDVVVCDGFSGNLVLKSVEGTAGSMFSLLKRELTKTFISKLAVALLKGRFKEIKQVMSYSEYGGASLFGLKAPVIKAHGSSVASSVYHTIAQAYEMVNQQVTTIIKTEVAKATKGSEEKGE.

Belongs to the PlsX family. In terms of assembly, homodimer. Probably interacts with PlsY.

Its subcellular location is the cytoplasm. The enzyme catalyses a fatty acyl-[ACP] + phosphate = an acyl phosphate + holo-[ACP]. The protein operates within lipid metabolism; phospholipid metabolism. Catalyzes the reversible formation of acyl-phosphate (acyl-PO(4)) from acyl-[acyl-carrier-protein] (acyl-ACP). This enzyme utilizes acyl-ACP as fatty acyl donor, but not acyl-CoA. This is Phosphate acyltransferase from Halalkalibacterium halodurans (strain ATCC BAA-125 / DSM 18197 / FERM 7344 / JCM 9153 / C-125) (Bacillus halodurans).